The chain runs to 252 residues: Type II secretion system protein N (252 aa).

Over 1-4 (MKNR) the chain is Cytoplasmic. Residues 5 to 25 (LTIGLLLAAIYLFWLLLSAPA) traverse the membrane as a helical segment. At 26–252 (RLLALTLSDD…QGEWLSEEKK (227 aa)) the chain is on the periplasmic side.

It belongs to the GSP N family.

The protein resides in the cell inner membrane. Its function is as follows. Involved in a type II secretion system (T2SS, formerly general secretion pathway, GSP) for the export of proteins. Required for the translocation of pullulanase. This Klebsiella pneumoniae protein is Type II secretion system protein N (pulN).